The sequence spans 957 residues: Glycine dehydrogenase (decarboxylating) (957 aa).

An N6-(pyridoxal phosphate)lysine modification is found at Lys708.

The protein belongs to the GcvP family. The glycine cleavage system is composed of four proteins: P, T, L and H. It depends on pyridoxal 5'-phosphate as a cofactor.

The enzyme catalyses N(6)-[(R)-lipoyl]-L-lysyl-[glycine-cleavage complex H protein] + glycine + H(+) = N(6)-[(R)-S(8)-aminomethyldihydrolipoyl]-L-lysyl-[glycine-cleavage complex H protein] + CO2. Its function is as follows. The glycine cleavage system catalyzes the degradation of glycine. The P protein binds the alpha-amino group of glycine through its pyridoxal phosphate cofactor; CO(2) is released and the remaining methylamine moiety is then transferred to the lipoamide cofactor of the H protein. The protein is Glycine dehydrogenase (decarboxylating) of Enterobacter sp. (strain 638).